A 209-amino-acid polypeptide reads, in one-letter code: Dual-specificity protein phosphatase SDP1 (209 aa).

A compositionally biased stretch (polar residues) spans 1–11; sequence MNIYTSPTRTP. The segment at 1–43 is disordered; sequence MNIYTSPTRTPNIAPKSGQRPSLPMLATDERSTDKESPNEDRE. A compositionally biased stretch (basic and acidic residues) spans 28–43; sequence TDERSTDKESPNEDRE. A disulfide bridge links Cys47 with Cys142. Positions 59-196 constitute a Tyrosine-protein phosphatase domain; sequence GPLLVLPEKI…LMEWEVALNA (138 aa). Position 111 (His111) interacts with 4-O-phospho-L-tyrosine. The active-site Phosphocysteine intermediate is the Cys140.

It belongs to the protein-tyrosine phosphatase family. Non-receptor class dual specificity subfamily.

The catalysed reaction is O-phospho-L-tyrosyl-[protein] + H2O = L-tyrosyl-[protein] + phosphate. Its function is as follows. Mediates dephosphorylation of MAPK substrates such as SLT2, acquiring enhanced catalytic activity under oxidative conditions. The protein is Dual-specificity protein phosphatase SDP1 (SDP1) of Saccharomyces cerevisiae (strain ATCC 204508 / S288c) (Baker's yeast).